Here is a 691-residue protein sequence, read N- to C-terminus: Elongation factor G (691 aa).

The 275-residue stretch at 8-282 folds into the tr-type G domain; sequence ERVRNIGIAA…AVIDYLPAPV (275 aa). Residues 17–24, 81–85, and 135–138 contribute to the GTP site; these read AHIDAGKT, DTPGH, and NKMD.

It belongs to the TRAFAC class translation factor GTPase superfamily. Classic translation factor GTPase family. EF-G/EF-2 subfamily.

It is found in the cytoplasm. In terms of biological role, catalyzes the GTP-dependent ribosomal translocation step during translation elongation. During this step, the ribosome changes from the pre-translocational (PRE) to the post-translocational (POST) state as the newly formed A-site-bound peptidyl-tRNA and P-site-bound deacylated tRNA move to the P and E sites, respectively. Catalyzes the coordinated movement of the two tRNA molecules, the mRNA and conformational changes in the ribosome. In Synechococcus sp. (strain CC9605), this protein is Elongation factor G.